The chain runs to 156 residues: Large ribosomal subunit protein eL24 (156 aa).

Basic and acidic residues predominate over residues 110 to 129 (KESKAKKQETQAAKKAEKAK). The segment at 110-156 (KESKAKKQETQAAKKAEKAKNAANPKARVTSKQGAKGAPVKVAAKSR) is disordered. The span at 130–156 (NAANPKARVTSKQGAKGAPVKVAAKSR) shows a compositional bias: low complexity.

It belongs to the eukaryotic ribosomal protein eL24 family. Component of the large ribosomal subunit (LSU). Mature N.crassa ribosomes consist of a small (40S) and a large (60S) subunit. The 40S small subunit contains 1 molecule of ribosomal RNA (18S rRNA) and at least 32 different proteins. The large 60S subunit contains 3 rRNA molecules (26S, 5.8S and 5S rRNA) and at least 42 different proteins.

It localises to the cytoplasm. Component of the ribosome, a large ribonucleoprotein complex responsible for the synthesis of proteins in the cell. The small ribosomal subunit (SSU) binds messenger RNAs (mRNAs) and translates the encoded message by selecting cognate aminoacyl-transfer RNA (tRNA) molecules. The large subunit (LSU) contains the ribosomal catalytic site termed the peptidyl transferase center (PTC), which catalyzes the formation of peptide bonds, thereby polymerizing the amino acids delivered by tRNAs into a polypeptide chain. The nascent polypeptides leave the ribosome through a tunnel in the LSU and interact with protein factors that function in enzymatic processing, targeting, and the membrane insertion of nascent chains at the exit of the ribosomal tunnel. This Neurospora crassa (strain ATCC 24698 / 74-OR23-1A / CBS 708.71 / DSM 1257 / FGSC 987) protein is Large ribosomal subunit protein eL24 (rpl-24).